A 90-amino-acid chain; its full sequence is Accessory gland-specific peptide 26Ab (90 aa).

An N-terminal signal peptide occupies residues 1-21; that stretch reads MNYFAVLCIFSCICFWQFSDA.

As to expression, main cells of the accessory glands of males.

It is found in the secreted. The protein localises to the extracellular space. Functionally, this protein is transferred from male to female during mating and may affect egglaying and behavior after mating. The protein is Accessory gland-specific peptide 26Ab (Acp26Ab) of Drosophila simulans (Fruit fly).